The primary structure comprises 92 residues: UPF0250 protein XF_1271 (92 aa).

The protein belongs to the UPF0250 family.

The chain is UPF0250 protein XF_1271 from Xylella fastidiosa (strain 9a5c).